Consider the following 89-residue polypeptide: Small ribosomal subunit protein bS16 (89 aa).

The protein belongs to the bacterial ribosomal protein bS16 family.

In Gloeobacter violaceus (strain ATCC 29082 / PCC 7421), this protein is Small ribosomal subunit protein bS16.